A 131-amino-acid polypeptide reads, in one-letter code: uncharacterized protein (131 aa).

The interval 101-131 is disordered; the sequence is SWWPPSGVVRGGPSSWPPSGVAEPREALGLP.

This is an uncharacterized protein from Homo sapiens (Human).